We begin with the raw amino-acid sequence, 253 residues long: MPAIALDPIHQFEVTKWLDLRLGNIDISFTNASGFMLLGVVLVIGFFSMATRKGELVPSRLQSVAEMGYGFIADMVRSAAGEEGLKFFPFVFTLFFFILFANLIGMVPYAFTTTSHIIVTGALAMTVILMVIVVGLIKNGLGFFKLFAPSGAPLPIYIILTPIEIISFLARPLTLGLRLFANMLAGHIMLKLFAGFTVMLIGAGAIYIPVAALAFAMGVALNALEFLVAGLQAYVFAILTCVYLNDALHADAH.

Helical transmembrane passes span 27–47, 87–107, 117–137, 146–166, 196–216, and 224–244; these read ISFTNASGFMLLGVVLVIGFF, FFPFVFTLFFFILFANLIGMV, IIVTGALAMTVILMVIVVGLI, LFAPSGAPLPIYIILTPIEII, FTVMLIGAGAIYIPVAALAFA, and LEFLVAGLQAYVFAILTCVYL.

This sequence belongs to the ATPase A chain family. F-type ATPases have 2 components, CF(1) - the catalytic core - and CF(0) - the membrane proton channel. CF(1) has five subunits: alpha(3), beta(3), gamma(1), delta(1), epsilon(1). CF(0) has three main subunits: a(1), b(2) and c(9-12). The alpha and beta chains form an alternating ring which encloses part of the gamma chain. CF(1) is attached to CF(0) by a central stalk formed by the gamma and epsilon chains, while a peripheral stalk is formed by the delta and b chains.

It is found in the cell inner membrane. In terms of biological role, key component of the proton channel; it plays a direct role in the translocation of protons across the membrane. The polypeptide is ATP synthase subunit a (Hyphomonas neptunium (strain ATCC 15444)).